The primary structure comprises 98 residues: Hainantoxin-XVII-2 (98 aa).

The first 40 residues, 1 to 40 (MTTVGVSLFRRSPEKITMKIATFLGLSFLLIASYVLICEA), serve as a signal peptide directing secretion. The propeptide occupies 41–64 (QHPGFQELLILEENMRDPENSKER). Intrachain disulfides connect C66-C81 and C73-C85.

This sequence belongs to the hainantoxin family. 17 subfamily. Expressed by the venom gland.

Its subcellular location is the secreted. Putative ion channel inhibitor. In Cyriopagopus hainanus (Chinese bird spider), this protein is Hainantoxin-XVII-2.